Consider the following 393-residue polypeptide: uncharacterized protein (393 aa).

Topologically, residues 1 to 17 are cytoplasmic; the sequence is MVSKDQTSFNKRWTLGL. A helical transmembrane segment spans residues 18–38; it reads LMLGLVIILWVLSSFLINLIF. Residues 39-46 are Vacuolar-facing; it reads EDDSYRKP. A helical transmembrane segment spans residues 47–67; that stretch reads FFITYTNTAAFIFYLFPTAKA. The Cytoplasmic segment spans residues 68–132; the sequence is VVVNYKDTGR…LYETIKLSAE (65 aa). Residue S93 is modified to Phosphoserine. The helical transmembrane segment at 133–153 threads the bilayer; it reads FCILWFTANLVTNASLAFTSV. Over 154–156 the chain is Vacuolar; that stretch reads ASQ. The chain crosses the membrane as a helical span at residues 157–176; the sequence is TILSTTSSFFTLFIGAICHV. At 177–182 the chain is on the cytoplasmic side; the sequence is ESLSKS. A helical transmembrane segment spans residues 183 to 200; sequence KVLGSFISFVGIIMVTKS. Over 201–219 the chain is Vacuolar; the sequence is DSHQRYQRHIADVSGDDND. Residues 220-240 traverse the membrane as a helical segment; the sequence is AVQVLIGNLLALAGAVLYGVY. At 241–257 the chain is on the cytoplasmic side; it reads STLLKREVGDETRVNMK. A helical membrane pass occupies residues 258–278; that stretch reads IFFGFVGLFNLLFLWPSLIVL. The Vacuolar portion of the chain corresponds to 279-292; the sequence is DFFGWEPFSLPKDP. The chain crosses the membrane as a helical span at residues 293-313; sequence KVVVIIFVNCLITFVSDFCWA. At 314 to 321 the chain is on the cytoplasmic side; sequence KAMLLTSP. The chain crosses the membrane as a helical span at residues 322-342; the sequence is LTVTVGLSITIPLAMFGDVIF. At 343-345 the chain is on the vacuolar side; that stretch reads KHK. Residues 346–366 traverse the membrane as a helical segment; it reads TMSALYLFGATLILGSFFIIN. The Cytoplasmic segment spans residues 367–393; it reads KSSEEEHFENSITASNYESVEVPAANN.

The protein belongs to the TPT transporter family.

It is found in the vacuole membrane. This is an uncharacterized protein from Saccharomyces cerevisiae (strain ATCC 204508 / S288c) (Baker's yeast).